The following is a 548-amino-acid chain: MNPSTAQARVVVDELIRGGVRDVVLCPGSRNAPLAFALHDADRAGRLRLHVRIDERTAGFLAIGLAVAERAPVCVAMTSGTAVANLGPAVVEANYARVPLIVLSANRPYELLGTGANQTFEQLGYFGTQVRANISLGLAPESGASALNFSALNGQWRSATCRVVVAATGARSANAGPVQFDIPLREPLVPDAQEPAVPYAPDGRPDGRPWTYTPPVTFDQPLDIDLTPDTVVIAGHGAGVHPNLAHLPTVAEPTAPAAQTPLHPLALRMIRPEQVIMLGRPTLHRPVSALLADPAVPVFALTTGPRWPDVSGNSQATGTRAVTAGAPAQAWLRRCAEANRHAVDAVRGQLAAHPLTTGLHVAAAVADALRPGDQLVLGASNPVRDIALVGFHTADVKVRSNRGVAGIDGTVSTAIGAALAHERSGGRTVALIGDLTFVHDSSGLLIGPTEPTPRKLTIVVSNDNGGGIFELLEQGDPRFSDVSSRIFGTPHDVDVGALCRAYHVESRQIEVGELAGALDEDFDGMRVLEVKADRSSLRALHASIRANL.

Belongs to the TPP enzyme family. MenD subfamily. In terms of assembly, homodimer. Mg(2+) is required as a cofactor. Mn(2+) serves as cofactor. The cofactor is thiamine diphosphate.

It catalyses the reaction isochorismate + 2-oxoglutarate + H(+) = 5-enolpyruvoyl-6-hydroxy-2-succinyl-cyclohex-3-ene-1-carboxylate + CO2. Its pathway is quinol/quinone metabolism; 1,4-dihydroxy-2-naphthoate biosynthesis; 1,4-dihydroxy-2-naphthoate from chorismate: step 2/7. The protein operates within quinol/quinone metabolism; menaquinone biosynthesis. In terms of biological role, catalyzes the thiamine diphosphate-dependent decarboxylation of 2-oxoglutarate and the subsequent addition of the resulting succinic semialdehyde-thiamine pyrophosphate anion to isochorismate to yield 2-succinyl-5-enolpyruvyl-6-hydroxy-3-cyclohexene-1-carboxylate (SEPHCHC). This is 2-succinyl-5-enolpyruvyl-6-hydroxy-3-cyclohexene-1-carboxylate synthase from Mycolicibacterium vanbaalenii (strain DSM 7251 / JCM 13017 / BCRC 16820 / KCTC 9966 / NRRL B-24157 / PYR-1) (Mycobacterium vanbaalenii).